Consider the following 338-residue polypeptide: Phosphatidate cytidylyltransferase, mitochondrial (338 aa).

The protein belongs to the TAM41 family. Mg(2+) is required as a cofactor.

The protein resides in the mitochondrion inner membrane. It catalyses the reaction a 1,2-diacyl-sn-glycero-3-phosphate + CTP + H(+) = a CDP-1,2-diacyl-sn-glycerol + diphosphate. The protein operates within phospholipid metabolism; CDP-diacylglycerol biosynthesis; CDP-diacylglycerol from sn-glycerol 3-phosphate: step 3/3. Its function is as follows. Catalyzes the conversion of phosphatidic acid (PA) to CDP-diacylglycerol (CDP-DAG), an essential intermediate in the synthesis of phosphatidylglycerol, cardiolipin and phosphatidylinositol. The sequence is that of Phosphatidate cytidylyltransferase, mitochondrial (tamm41) from Danio rerio (Zebrafish).